A 424-amino-acid chain; its full sequence is Adenylyltransferase and sulfurtransferase UBA4 (424 aa).

Residues Gly-76, Asp-97, Thr-104 to Arg-108, Lys-121, and Asp-165 to Ser-166 contribute to the ATP site. Positions 206 and 209 each coordinate Zn(2+). The active-site Glycyl thioester intermediate; for adenylyltransferase activity is Cys-223. Cys-283 lines the Zn(2+) pocket. The region spanning Arg-326–Pro-422 is the Rhodanese domain. Residue Cys-382 is the Cysteine persulfide intermediate; for sulfurtransferase activity of the active site.

The protein in the N-terminal section; belongs to the HesA/MoeB/ThiF family. UBA4 subfamily. It depends on Zn(2+) as a cofactor.

The protein localises to the cytoplasm. It is found in the cytosol. It functions in the pathway tRNA modification; 5-methoxycarbonylmethyl-2-thiouridine-tRNA biosynthesis. Its function is as follows. Plays a central role in 2-thiolation of mcm(5)S(2)U at tRNA wobble positions of cytosolic tRNA(Lys), tRNA(Glu) and tRNA(Gln). Acts by mediating the C-terminal thiocarboxylation of sulfur carrier URM1. Its N-terminus first activates URM1 as acyl-adenylate (-COAMP), then the persulfide sulfur on the catalytic cysteine is transferred to URM1 to form thiocarboxylation (-COSH) of its C-terminus. The reaction probably involves hydrogen sulfide that is generated from the persulfide intermediate and that acts as a nucleophile towards URM1. Subsequently, a transient disulfide bond is formed. Does not use thiosulfate as sulfur donor; NFS1 probably acting as a sulfur donor for thiocarboxylation reactions. Prior mcm(5) tRNA modification by the elongator complex is required for 2-thiolation. May also be involved in protein urmylation. In Meyerozyma guilliermondii (strain ATCC 6260 / CBS 566 / DSM 6381 / JCM 1539 / NBRC 10279 / NRRL Y-324) (Yeast), this protein is Adenylyltransferase and sulfurtransferase UBA4.